A 103-amino-acid chain; its full sequence is RNA-binding protein YlxQ (103 aa).

It belongs to the eukaryotic ribosomal protein eL8 family.

In terms of biological role, RNA-binding protein that recognizes the K-turn motif present in ribosomal RNA, but also in box C/D and box C'/D' sRNAs. This Enterococcus faecium (Streptococcus faecium) protein is RNA-binding protein YlxQ.